Consider the following 210-residue polypeptide: Claudin-4 (210 aa).

Residues 1–7 (MASMGLQ) lie on the Cytoplasmic side of the membrane. An interaction with EPHA2 region spans residues 1–103 (MASMGLQVMG…GVLLSVVGGK (103 aa)). The helical transmembrane segment at 8 to 28 (VMGIALAVLGWLGAILSCALP) threads the bilayer. Residues 29-81 (MWRVTAFIGSNIVTSQTIWEGLWMNCVVQSTGQMQCKVYDSLLALPQDLQAAR) lie on the Extracellular side of the membrane. C54 and C64 are disulfide-bonded. The chain crosses the membrane as a helical span at residues 82 to 102 (ALMVVSIILAALGVLLSVVGG). Residues 103-117 (KCTNCVEDESAKAKT) lie on the Cytoplasmic side of the membrane. Residues 118–138 (MIVAGVVFLLAGLLVMVPASW) form a helical membrane-spanning segment. The Extracellular portion of the chain corresponds to 139–160 (TANNIIRDFYNPLVVSGQKREM). A helical membrane pass occupies residues 161–181 (GASLYVGWAASGLLLLGGALL). Over 182–210 (CCNCPPRADKPYSAKYSAAARSAPASNYV) the chain is Cytoplasmic. A Phosphotyrosine modification is found at Y209. An interactions with TJP1, TJP2 and TJP3 region spans residues 209–210 (YV).

This sequence belongs to the claudin family. As to quaternary structure, can form heteropolymeric strands with other claudins. Interacts with CLDN8. Interacts with CLDN1. Directly interacts with TJP1/ZO-1. Interacts with TJP2/ZO-2 and TJP3/ZO-3. Interacts with EPHA2; phosphorylates CLDN4 and may regulate tight junctions. In terms of processing, phosphorylated. Phosphorylation by EPHA2 is stimulated by EFNA1 and alters interaction with TJP1.

The protein localises to the cell junction. The protein resides in the tight junction. It is found in the cell membrane. It catalyses the reaction chloride(in) = chloride(out). The catalysed reaction is bromide(in) = bromide(out). It carries out the reaction iodide(out) = iodide(in). The enzyme catalyses fluoride(in) = fluoride(out). Can associate with other claudins to regulate tight junction structural and functional strand dynamics. May coassemble with CLDN8 into tight junction strands containing anion-selective channels that convey paracellular chloride permeability in renal collecting ducts. May integrate into CLDN3 strands to modulate localized tight junction barrier properties. May disrupt strand assembly of channel-forming CLDN2 and CLDN15 and inhibit cation conductance. Cannot form tight junction strands on its own. The protein is Claudin-4 (CLDN4) of Canis lupus familiaris (Dog).